Reading from the N-terminus, the 795-residue chain is MINLDDKNNIGRVIPVSDIVLLPGMYHTLKFNKFSETQIESLSDEDIVNIALPLKQNFGQSKLKEEDFHRVGVTFQVNAIEKTEKGYKAEIKILDRVEIKTFSIEEDSIKAEFEFAPDIIDLTEKSKDEMVEYIKKVTREISENFKGSEKFMLAVEGQKDLNKLMGYLSHFMQISSEEKYDLLETQSLKDRGLKFIDYLLKQKESLKLQFELAEKFTEKANKNYRETVLREQLKAIQEELNEGKSSPSKKDKNYLNRIEEAQMPDEIKEVALEELGKLESQSPNSAEYNVIKNYLELLIQLPWKKQEFKDIDLEEARRILDEQHYGLEKVKDRIIQHLAVMQLKNDKKGSILLLVGPPGVGKTSLGKSIAEALNRKYVRLSLGGVRDEAEIRGHRRTYVGAMPGRIIQSIKKAGEINPVMVLDEVDKLMASYNGDPASALLEVLDPEQNDTFTDHYLDVPYDLSNVFFIATANSLDTIPRPLLDRMEVIQISSYTMNEKFHIGKNHLISAVLEEHGLNDTQLVIEDAALERIISEYTLEAGVRGLKKQIATIARIASEKIVSNKVELPFKVKEDDLEDLLGRKVSSHDKAQDDNVPGVVTGLAWTSVGGEILFIEATGMLGSGQIVLTGQLGDVMKESAQISLSLLKSRLPINAINFRERDIHIHVPSGSVPKDGPSAGIALFTALASLVTGIKVDSKLAMTGEITLRGAVLPIGGLKEKLLGAQRAGITKVLIPKDNVVDLNEVPQEVKEQLTIIAVETVEDVLRETLGISLPRIEHIFNPNKFIEGTFKPAEE.

The region spanning 11 to 203 is the Lon N-terminal domain; that stretch reads GRVIPVSDIV…KFIDYLLKQK (193 aa). Residue 356 to 363 participates in ATP binding; it reads GPPGVGKT. Residues 593 to 771 enclose the Lon proteolytic domain; sequence DNVPGVVTGL…EDVLRETLGI (179 aa). Catalysis depends on residues Ser-677 and Lys-720.

The protein belongs to the peptidase S16 family. As to quaternary structure, homohexamer. Organized in a ring with a central cavity.

Its subcellular location is the cytoplasm. The enzyme catalyses Hydrolysis of proteins in presence of ATP.. ATP-dependent serine protease that mediates the selective degradation of mutant and abnormal proteins as well as certain short-lived regulatory proteins. Required for cellular homeostasis and for survival from DNA damage and developmental changes induced by stress. Degrades polypeptides processively to yield small peptide fragments that are 5 to 10 amino acids long. Binds to DNA in a double-stranded, site-specific manner. This is Lon protease from Clostridium beijerinckii (strain ATCC 51743 / NCIMB 8052) (Clostridium acetobutylicum).